Reading from the N-terminus, the 400-residue chain is Enoyl-[acyl-carrier-protein] reductase [NADH] (400 aa).

NAD(+) is bound by residues 48 to 53 (GSSSGY), 74 to 75 (FE), 111 to 112 (DA), and 139 to 140 (LA). Tyrosine 225 contributes to the substrate binding site. Tyrosine 235 serves as the catalytic Proton donor. NAD(+) is bound by residues lysine 244 and 273 to 275 (VVT).

The protein belongs to the TER reductase family. As to quaternary structure, monomer.

The enzyme catalyses a 2,3-saturated acyl-[ACP] + NAD(+) = a (2E)-enoyl-[ACP] + NADH + H(+). Its pathway is lipid metabolism; fatty acid biosynthesis. Its function is as follows. Involved in the final reduction of the elongation cycle of fatty acid synthesis (FAS II). Catalyzes the reduction of a carbon-carbon double bond in an enoyl moiety that is covalently linked to an acyl carrier protein (ACP). The sequence is that of Enoyl-[acyl-carrier-protein] reductase [NADH] from Aliivibrio fischeri (strain MJ11) (Vibrio fischeri).